The primary structure comprises 204 residues: FMN-dependent NADH:quinone oxidoreductase (204 aa).

S9 provides a ligand contact to FMN.

Belongs to the azoreductase type 1 family. Homodimer. Requires FMN as cofactor.

It catalyses the reaction 2 a quinone + NADH + H(+) = 2 a 1,4-benzosemiquinone + NAD(+). The catalysed reaction is N,N-dimethyl-1,4-phenylenediamine + anthranilate + 2 NAD(+) = 2-(4-dimethylaminophenyl)diazenylbenzoate + 2 NADH + 2 H(+). In terms of biological role, quinone reductase that provides resistance to thiol-specific stress caused by electrophilic quinones. Its function is as follows. Also exhibits azoreductase activity. Catalyzes the reductive cleavage of the azo bond in aromatic azo compounds to the corresponding amines. The protein is FMN-dependent NADH:quinone oxidoreductase of Thiobacillus denitrificans (strain ATCC 25259 / T1).